Consider the following 279-residue polypeptide: Phage-like element PBSX protein XepA (279 aa).

It to B.subtilis YqxG/YqdC.

Not known; does not seem to be involved in host cell lysis. In Bacillus subtilis (strain 168), this protein is Phage-like element PBSX protein XepA (xepA).